Consider the following 138-residue polypeptide: Large ribosomal subunit protein uL16 (138 aa).

It belongs to the universal ribosomal protein uL16 family. Part of the 50S ribosomal subunit.

In terms of biological role, binds 23S rRNA and is also seen to make contacts with the A and possibly P site tRNAs. The polypeptide is Large ribosomal subunit protein uL16 (Chlamydia caviae (strain ATCC VR-813 / DSM 19441 / 03DC25 / GPIC) (Chlamydophila caviae)).